A 303-amino-acid chain; its full sequence is Methionine import ATP-binding protein MetN (303 aa).

Positions 1-222 constitute an ABC transporter domain; that stretch reads MLDQISLEIP…PDPKMRHFLG (222 aa). An ATP-binding site is contributed by 19-26; it reads GHSGAGKS.

The protein belongs to the ABC transporter superfamily. Methionine importer (TC 3.A.1.24) family. The complex is composed of two ATP-binding proteins (MetN), two transmembrane proteins (MetI) and a solute-binding protein (MetQ).

Its subcellular location is the cell inner membrane. It catalyses the reaction L-methionine(out) + ATP + H2O = L-methionine(in) + ADP + phosphate + H(+). The catalysed reaction is D-methionine(out) + ATP + H2O = D-methionine(in) + ADP + phosphate + H(+). Part of the ABC transporter complex MetNIQ involved in methionine import. Responsible for energy coupling to the transport system. The protein is Methionine import ATP-binding protein MetN of Wolinella succinogenes (strain ATCC 29543 / DSM 1740 / CCUG 13145 / JCM 31913 / LMG 7466 / NCTC 11488 / FDC 602W) (Vibrio succinogenes).